The primary structure comprises 98 residues: Aspartyl/glutamyl-tRNA(Asn/Gln) amidotransferase subunit C (98 aa).

The protein belongs to the GatC family. In terms of assembly, heterotrimer of A, B and C subunits.

The catalysed reaction is L-glutamyl-tRNA(Gln) + L-glutamine + ATP + H2O = L-glutaminyl-tRNA(Gln) + L-glutamate + ADP + phosphate + H(+). It carries out the reaction L-aspartyl-tRNA(Asn) + L-glutamine + ATP + H2O = L-asparaginyl-tRNA(Asn) + L-glutamate + ADP + phosphate + 2 H(+). Functionally, allows the formation of correctly charged Asn-tRNA(Asn) or Gln-tRNA(Gln) through the transamidation of misacylated Asp-tRNA(Asn) or Glu-tRNA(Gln) in organisms which lack either or both of asparaginyl-tRNA or glutaminyl-tRNA synthetases. The reaction takes place in the presence of glutamine and ATP through an activated phospho-Asp-tRNA(Asn) or phospho-Glu-tRNA(Gln). The polypeptide is Aspartyl/glutamyl-tRNA(Asn/Gln) amidotransferase subunit C (Microcystis aeruginosa (strain NIES-843 / IAM M-2473)).